We begin with the raw amino-acid sequence, 143 residues long: Nucleoside diphosphate kinase (143 aa).

K11, F59, R87, T93, R104, and N114 together coordinate ATP. H117 serves as the catalytic Pros-phosphohistidine intermediate.

Belongs to the NDK family. As to quaternary structure, homotetramer. Mg(2+) is required as a cofactor.

Its subcellular location is the cytoplasm. The enzyme catalyses a 2'-deoxyribonucleoside 5'-diphosphate + ATP = a 2'-deoxyribonucleoside 5'-triphosphate + ADP. The catalysed reaction is a ribonucleoside 5'-diphosphate + ATP = a ribonucleoside 5'-triphosphate + ADP. Major role in the synthesis of nucleoside triphosphates other than ATP. The ATP gamma phosphate is transferred to the NDP beta phosphate via a ping-pong mechanism, using a phosphorylated active-site intermediate. In Shewanella frigidimarina (strain NCIMB 400), this protein is Nucleoside diphosphate kinase.